A 499-amino-acid chain; its full sequence is MEFALTLHIEKRKKADVLVLPFWKGTSQPEAAIALHPLKLSLDSVFNTGDFKGKEGETLFLYVEGLVEMRVALLGLGEKNKVSTEALRKSYGCLAKACLGKKLKTLNILMPEFNKTEEDAFIKAITEGLLLPNYVYDRLKSKQEEDDEVTLLQKINFISSNKHVLALAEEVAAICDGVYYTRDLINGNADEITPQYLAKCAQGLSQEYPQIKTTVFDKKRLEKEQMGLLLAVNRGSNLDPTLIIMEYKGNPKSKDHTVIIGKGVTYDTGGLNIKPTGGIETMKCDMSGGAACFGTMLAACHLDLKVNLTAIIPATENSVDAASFKPGDVYRSYLGKTVEMTNSDAEGRLILADALAYASQNLKPSRLIDIATLTGAIEISLGSEASGLMSTDDQLAKSLIQAGENTHERLWRMPLYEGYQEKLKSDIADLKSWNGRSGSSCVAAMFLKNFVGKDIPWAHLDIAGTAYVTEPKKYMPKYASGVGVRLLVEFLKQLSMVKN.

Positions 262 and 267 each coordinate Mn(2+). Lys274 is a catalytic residue. The Mn(2+) site is built by Asp285, Asp344, and Glu346. The active site involves Arg348.

It belongs to the peptidase M17 family. Requires Mn(2+) as cofactor.

The protein resides in the cytoplasm. It catalyses the reaction Release of an N-terminal amino acid, Xaa-|-Yaa-, in which Xaa is preferably Leu, but may be other amino acids including Pro although not Arg or Lys, and Yaa may be Pro. Amino acid amides and methyl esters are also readily hydrolyzed, but rates on arylamides are exceedingly low.. The enzyme catalyses Release of an N-terminal amino acid, preferentially leucine, but not glutamic or aspartic acids.. In terms of biological role, presumably involved in the processing and regular turnover of intracellular proteins. Catalyzes the removal of unsubstituted N-terminal amino acids from various peptides. The polypeptide is Probable cytosol aminopeptidase (Protochlamydia amoebophila (strain UWE25)).